Consider the following 219-residue polypeptide: Adenylate kinase (219 aa).

Residue 10–15 participates in ATP binding; sequence GAGKGT. The interval 30–59 is NMP; that stretch reads STGDMLRAAVKAGTPLGQQAKKIMDEGGLV. AMP-binding positions include T31, R36, 57–59, 85–88, and Q92; these read GLV and GFPR. An LID region spans residues 122–159; the sequence is GRRVHPGSGRVYHVTHNPPRQEGKDDVTGEDLVQREDD. ATP is bound by residues R123 and 132 to 133; that span reads VY. A disordered region spans residues 128–150; that stretch reads GSGRVYHVTHNPPRQEGKDDVTG. Residues 140–150 are compositionally biased toward basic and acidic residues; the sequence is PRQEGKDDVTG. AMP is bound by residues R156 and R167. Position 203 (R203) interacts with ATP.

The protein belongs to the adenylate kinase family. Monomer.

The protein localises to the cytoplasm. The enzyme catalyses AMP + ATP = 2 ADP. It participates in purine metabolism; AMP biosynthesis via salvage pathway; AMP from ADP: step 1/1. Functionally, catalyzes the reversible transfer of the terminal phosphate group between ATP and AMP. Plays an important role in cellular energy homeostasis and in adenine nucleotide metabolism. This chain is Adenylate kinase, found in Halorhodospira halophila (strain DSM 244 / SL1) (Ectothiorhodospira halophila (strain DSM 244 / SL1)).